The following is a 473-amino-acid chain: MKTLYSLRRFYPVETLFNGTLALAGRDQETTGFAWWAGNARLINLSGKLLGAHVAHAGLIVFWAGAMNLFEVAHFVPEKPMYEQGLILLPHLATLGWGVGPGGEVIDTFPYFVSGVLHLISSAVLGFGGIYHALLGPETLEESFPFFGYVWKDRNKMTTILGIHLILLGLGAFLLVFKALYFGGVYDTWAPGGGDVRKITNLTLSPSILFGYLLKSPFGGEGWIVSVDDLEDIIGGHVWLGSICILGGIWHILTKPFAWARRALVWSGEAYLSYSLAALSVFGFIACCFVWFNNTAYPSEFYGPTGPEASQAQAFTFLVRDQRLGANVGSAQGPTGLGKYLMRSPTGEVIFGGETMRFWDLRAPWLEPLRGPNGLDLSRLKKDIQPWQERRSAEYMTHAPLGSLNSVGGVATEINAVNYVSPRSWLATSHFVLGFFLFVGHLWHAGRARAAAAGFEKGIDRDFEPALSMTPLN.

The propeptide occupies 1-14 (MKTLYSLRRFYPVE). T15 is modified (N-acetylthreonine). Position 15 is a phosphothreonine (T15). The next 5 helical transmembrane spans lie at 69-93 (LFEV…PHLA), 134-155 (LLGP…KDRN), 178-200 (KALY…RKIT), 255-275 (KPFA…LSYS), and 291-312 (WFNN…ASQA). E367 lines the [CaMn4O5] cluster pocket. A helical transmembrane segment spans residues 447–471 (RARAAAAGFEKGIDRDFEPALSMTP).

The protein belongs to the PsbB/PsbC family. PsbC subfamily. In terms of assembly, PSII is composed of 1 copy each of membrane proteins PsbA, PsbB, PsbC, PsbD, PsbE, PsbF, PsbH, PsbI, PsbJ, PsbK, PsbL, PsbM, PsbT, PsbX, PsbY, PsbZ, Psb30/Ycf12, at least 3 peripheral proteins of the oxygen-evolving complex and a large number of cofactors. It forms dimeric complexes. Requires Binds multiple chlorophylls and provides some of the ligands for the Ca-4Mn-5O cluster of the oxygen-evolving complex. It may also provide a ligand for a Cl- that is required for oxygen evolution. PSII binds additional chlorophylls, carotenoids and specific lipids. as cofactor.

It localises to the plastid. Its subcellular location is the chloroplast thylakoid membrane. One of the components of the core complex of photosystem II (PSII). It binds chlorophyll and helps catalyze the primary light-induced photochemical processes of PSII. PSII is a light-driven water:plastoquinone oxidoreductase, using light energy to abstract electrons from H(2)O, generating O(2) and a proton gradient subsequently used for ATP formation. This chain is Photosystem II CP43 reaction center protein, found in Oenothera argillicola (Appalachian evening primrose).